The primary structure comprises 180 residues: MNLEKGNIERKKHGVHVNEYLQSVSNPNVYAAGDAAATDGLPLTPVASADSHVVASNLLKGNSKKIEYPVIPSAVFTVPKMASVGMSEEEAKNSGRNIKVKQKNISDWFTYKRTNEDFAAFKVLIDEDHDQIVGAHLISNEADELINHFATAIRFGISTKELKQMIFAYPTAASDIAHML.

This is an uncharacterized protein from Staphylococcus aureus.